Here is a 171-residue protein sequence, read N- to C-terminus: LIM domain transcription factor LMO4-A (171 aa).

Residues 1 to 19 (MVNNRSSESTTTAVSSNGS) show a composition bias toward polar residues. Positions 1 to 21 (MVNNRSSESTTTAVSSNGSPP) are disordered. LIM zinc-binding domains lie at 22–84 (KACA…LFGN) and 86–148 (GACN…GLLN).

As to expression, at the start of gastrulation (stage 10), expressed in the mesodermal marginal zone. Shortly after (stage 11), expression is down-regulated in the dorsal most region. During neurulation, expressed in the neural plate and ventral epidermis. At late neurula stages, also expressed more rostrally, and then in the brain, migrating neural crests and ventral epidermis.

Its function is as follows. Acts as a positive cofactor of GATA transcription factors to establish the identity of the ventral mesoderm during gastrulation. Down-regulation in the dorsal mesoderm is necessary for the proper formation of this territory since, when present, lmo4 may bind ldb1 and restrict the availability of this cofactor for Spemman organizer transcription factors. At neurula stages, suppresses primary neuron differentiation and modulates gene expression at the Isthmic Organizer of the midbrain-hindbrain boundary. This chain is LIM domain transcription factor LMO4-A (lmo4-a), found in Xenopus laevis (African clawed frog).